The primary structure comprises 542 residues: Glucans biosynthesis protein D (542 aa).

The segment at residues 1-31 is a signal peptide (tat-type signal); that stretch reads MHRRNLLKASMAIAAYTGLSATGLLASRAWA.

This sequence belongs to the OpgD/OpgG family. Predicted to be exported by the Tat system. The position of the signal peptide cleavage has not been experimentally proven.

It is found in the periplasm. The protein operates within glycan metabolism; osmoregulated periplasmic glucan (OPG) biosynthesis. In terms of biological role, probably involved in the control of the structural glucose backbone of osmoregulated periplasmic glucans (OPGs). The polypeptide is Glucans biosynthesis protein D (Pseudomonas fluorescens (strain Pf0-1)).